Reading from the N-terminus, the 261-residue chain is Cytochrome c oxidase subunit 3 (261 aa).

Residues 1–15 (MAHQAHPYHMVDPSP) are Mitochondrial matrix-facing. A helical membrane pass occupies residues 16 to 34 (WPLTGATAALLMTSGLAIW). Topologically, residues 35-40 (FHFHSL) are mitochondrial intermembrane. The helical transmembrane segment at 41–66 (LLLYLGLTLLLLTMIQWWRDIIREGT) threads the bilayer. Residues 67-72 (FQGHHT) lie on the Mitochondrial matrix side of the membrane. Residues 73 to 105 (PPVQKGLRYGMILFIVSEVFFFLGFFWAFYHSS) form a helical membrane-spanning segment. The Mitochondrial intermembrane segment spans residues 106–128 (LAPTPELGGCWPPTGINPLDPFE). The helical transmembrane segment at 129–152 (VPLLNTAVLLASGVTVTWAHHGLM) threads the bilayer. At 153–155 (EGN) the chain is on the mitochondrial matrix side. The helical transmembrane segment at 156–183 (RKEAIQALTLTIILGVYFTALQAMEYYE) threads the bilayer. Over 184 to 190 (APFTIAD) the chain is Mitochondrial intermembrane. The helical transmembrane segment at 191 to 223 (GVYGTTFFVATGFHGLHVIIGSTFLAVCLLRQV) threads the bilayer. Over 224 to 232 (LYHFTSEHH) the chain is Mitochondrial matrix. Residues 233-256 (FGFEAAAWYWHFVDVVWLFLYVSI) traverse the membrane as a helical segment. At 257-261 (YWWGS) the chain is on the mitochondrial intermembrane side.

Belongs to the cytochrome c oxidase subunit 3 family. Component of the cytochrome c oxidase (complex IV, CIV), a multisubunit enzyme composed of 14 subunits. The complex is composed of a catalytic core of 3 subunits MT-CO1, MT-CO2 and MT-CO3, encoded in the mitochondrial DNA, and 11 supernumerary subunits COX4I, COX5A, COX5B, COX6A, COX6B, COX6C, COX7A, COX7B, COX7C, COX8 and NDUFA4, which are encoded in the nuclear genome. The complex exists as a monomer or a dimer and forms supercomplexes (SCs) in the inner mitochondrial membrane with NADH-ubiquinone oxidoreductase (complex I, CI) and ubiquinol-cytochrome c oxidoreductase (cytochrome b-c1 complex, complex III, CIII), resulting in different assemblies (supercomplex SCI(1)III(2)IV(1) and megacomplex MCI(2)III(2)IV(2)).

The protein localises to the mitochondrion inner membrane. The catalysed reaction is 4 Fe(II)-[cytochrome c] + O2 + 8 H(+)(in) = 4 Fe(III)-[cytochrome c] + 2 H2O + 4 H(+)(out). Its function is as follows. Component of the cytochrome c oxidase, the last enzyme in the mitochondrial electron transport chain which drives oxidative phosphorylation. The respiratory chain contains 3 multisubunit complexes succinate dehydrogenase (complex II, CII), ubiquinol-cytochrome c oxidoreductase (cytochrome b-c1 complex, complex III, CIII) and cytochrome c oxidase (complex IV, CIV), that cooperate to transfer electrons derived from NADH and succinate to molecular oxygen, creating an electrochemical gradient over the inner membrane that drives transmembrane transport and the ATP synthase. Cytochrome c oxidase is the component of the respiratory chain that catalyzes the reduction of oxygen to water. Electrons originating from reduced cytochrome c in the intermembrane space (IMS) are transferred via the dinuclear copper A center (CU(A)) of subunit 2 and heme A of subunit 1 to the active site in subunit 1, a binuclear center (BNC) formed by heme A3 and copper B (CU(B)). The BNC reduces molecular oxygen to 2 water molecules using 4 electrons from cytochrome c in the IMS and 4 protons from the mitochondrial matrix. This is Cytochrome c oxidase subunit 3 (MT-CO3) from Scyliorhinus canicula (Small-spotted catshark).